The following is a 298-amino-acid chain: Protoheme IX farnesyltransferase (298 aa).

A run of 8 helical transmembrane segments spans residues 26–46, 48–68, 110–130, 147–167, 174–194, 220–240, 243–263, and 276–296; these read IVIL…GGPP, LGLT…ANAI, FLVL…GLLF, IVIG…AVTG, VIMF…LALF, ILLY…TGTV, LYLW…VGLL, and TYGW…LDVT.

This sequence belongs to the UbiA prenyltransferase family. Protoheme IX farnesyltransferase subfamily. As to quaternary structure, interacts with CtaA.

It localises to the cell membrane. It carries out the reaction heme b + (2E,6E)-farnesyl diphosphate + H2O = Fe(II)-heme o + diphosphate. It functions in the pathway porphyrin-containing compound metabolism; heme O biosynthesis; heme O from protoheme: step 1/1. In terms of biological role, converts heme B (protoheme IX) to heme O by substitution of the vinyl group on carbon 2 of heme B porphyrin ring with a hydroxyethyl farnesyl side group. The chain is Protoheme IX farnesyltransferase from Symbiobacterium thermophilum (strain DSM 24528 / JCM 14929 / IAM 14863 / T).